Here is a 305-residue protein sequence, read N- to C-terminus: MEKVSVETLIKDLNLEVIVKAENNKIDITTSDVNRPGLQFAGFYEHFAYERVQIMGKVETTFVEQLPDEVLAERADKFFAYPIPCLIVTRDLNIRQEIIEAAKKHDRYLLRTKEASTKFINRLINYLDEKLAPQITIHGNLVDVYGIGVLLLGESGIGKSETALELVKRGHRLVADDAVEIRKIGEDKLQGSAPEIIRHFIEIRGIGILDVKTLYGVGSVRNSMSIDLVIQLEEWDEDKYYDRLGLEDEYIKFLDVEVPKLTIPVRPGRNLAIIVEVAAMNHRQKQMGYNAAHELNKKLLKQIGN.

Catalysis depends on residues H138 and K159. 153–160 provides a ligand contact to ATP; the sequence is GESGIGKS. S160 contributes to the Mg(2+) binding site. Residue D177 is the Proton acceptor; for phosphorylation activity. Proton donor; for dephosphorylation activity of the active site. The important for the catalytic mechanism of both phosphorylation and dephosphorylation stretch occupies residues 201–210; sequence IEIRGIGILD. Residue E202 participates in Mg(2+) binding. Residue R243 is part of the active site. Residues 264–269 are important for the catalytic mechanism of dephosphorylation; that stretch reads PVRPGR.

This sequence belongs to the HPrK/P family. In terms of assembly, homohexamer. Mg(2+) serves as cofactor.

The enzyme catalyses [HPr protein]-L-serine + ATP = [HPr protein]-O-phospho-L-serine + ADP + H(+). It carries out the reaction [HPr protein]-O-phospho-L-serine + phosphate + H(+) = [HPr protein]-L-serine + diphosphate. Functionally, catalyzes the ATP- as well as the pyrophosphate-dependent phosphorylation of a specific serine residue in HPr, a phosphocarrier protein of the phosphoenolpyruvate-dependent sugar phosphotransferase system (PTS). HprK/P also catalyzes the pyrophosphate-producing, inorganic phosphate-dependent dephosphorylation (phosphorolysis) of seryl-phosphorylated HPr (P-Ser-HPr). The two antagonistic activities of HprK/P are regulated by several intracellular metabolites, which change their concentration in response to the absence or presence of rapidly metabolisable carbon sources (glucose, fructose, etc.) in the growth medium. Therefore, by controlling the phosphorylation state of HPr, HPrK/P is a sensor enzyme that plays a major role in the regulation of carbon metabolism and sugar transport: it mediates carbon catabolite repression (CCR), and regulates PTS-catalyzed carbohydrate uptake and inducer exclusion. This is HPr kinase/phosphorylase from Caldanaerobacter subterraneus subsp. tengcongensis (strain DSM 15242 / JCM 11007 / NBRC 100824 / MB4) (Thermoanaerobacter tengcongensis).